The chain runs to 236 residues: uncharacterized protein (236 aa).

The protein resides in the plastid. It localises to the chloroplast. This is an uncharacterized protein from Chlorella vulgaris (Green alga).